Reading from the N-terminus, the 443-residue chain is Probable serine transporter (443 aa).

Residues 1-48 lie on the Cytoplasmic side of the membrane; that stretch reads MEIASNKGVIADASTPAGRAGMSESEWREAIKFDSTDTGWVIMSIGMA. Residues 49–69 form a helical membrane-spanning segment; sequence IGAGIVFLPVQVGLMGLWVFL. The Periplasmic segment spans residues 70 to 110; sequence LSSVIGYPAMYLFQRLFINTLAESPECKDYPSVISGYLGKN. Residues 111 to 131 form a helical membrane-spanning segment; the sequence is WGILLGALYFVMLVIWMFVYS. Topologically, residues 132–149 are cytoplasmic; it reads TAITNDSASYLHTFGVTE. The helical transmembrane segment at 150 to 170 threads the bilayer; it reads GLLSDSPFYGLVLICILVAIS. Residues 171–182 lie on the Periplasmic side of the membrane; the sequence is SRGEKLLFKIST. A helical membrane pass occupies residues 183-203; the sequence is GMVLTKLLVVAALGVSMVGMW. Residues 204 to 214 lie on the Cytoplasmic side of the membrane; sequence HLYNVGSLPPL. A helical transmembrane segment spans residues 215–235; it reads GLLVKNAIITLPFTLTSILFI. Residues 236–264 lie on the Periplasmic side of the membrane; that stretch reads QTLSPMVISYRSREKSIEVARHKALRAMN. A helical transmembrane segment spans residues 265–285; sequence IAFGILFVTVFFYAVSFTLAM. The Cytoplasmic segment spans residues 286 to 297; that stretch reads GHDEAVKAYEQN. Helical transmembrane passes span 298–318 and 319–339; these read ISALAIAAQFISGDGAAWVKV and VSVILNIFAVMTAFFGVYLGF. Over 340–367 the chain is Cytoplasmic; sequence REATQGIVMNILRRKMPAEKINENLVQR. The helical transmembrane segment at 368 to 388 threads the bilayer; that stretch reads GIMIFAILLAWSAIVLNAPVL. A topological domain (periplasmic) is located at residue S389. Residues 390 to 410 traverse the membrane as a helical segment; sequence FTSICSPIFGMVGCLIPAWLV. Residues 411 to 421 lie on the Cytoplasmic side of the membrane; that stretch reads YKVPALHKYKG. The helical transmembrane segment at 422 to 442 threads the bilayer; that stretch reads MSLYLIIVTGLLLCVSPFLAF. Position 443 (S443) is a topological domain, periplasmic.

Belongs to the amino acid/polyamine transporter 2 family. SdaC/TdcC subfamily.

Its subcellular location is the cell inner membrane. In terms of biological role, plays a role in L-cysteine detoxification. May transport both D- and L-serine. In Escherichia coli (strain K12), this protein is Probable serine transporter (dlsT).